The following is a 274-amino-acid chain: Kit ligand (274 aa).

Residues M1–T25 form the signal peptide. Over K26 to Q215 the chain is Extracellular. Cystine bridges form between C29–C114 and C68–C164. Residues N90, N97, N145, and N196 are each glycosylated (N-linked (GlcNAc...) asparagine). Residues W216–W238 form a helical membrane-spanning segment. Residues K239–V274 lie on the Cytoplasmic side of the membrane.

It belongs to the SCF family. Homodimer, non-covalently linked. Heterotetramer with KIT, binding two KIT molecules; thereby mediates KIT dimerization and subsequent activation by autophosphorylation. A soluble form is produced by proteolytic processing of isoform 1 in the extracellular domain.

It is found in the cytoplasm. The protein resides in the cytoskeleton. Its subcellular location is the cell membrane. The protein localises to the cell projection. It localises to the lamellipodium. It is found in the filopodium. The protein resides in the secreted. In terms of biological role, ligand for the receptor-type protein-tyrosine kinase KIT. Plays an essential role in the regulation of cell survival and proliferation, hematopoiesis, stem cell maintenance, gametogenesis, mast cell development, migration and function, and in melanogenesis. KITLG/SCF binding can activate several signaling pathways. Promotes phosphorylation of PIK3R1, the regulatory subunit of phosphatidylinositol 3-kinase, and subsequent activation of the kinase AKT1. KITLG/SCF and KIT also transmit signals via GRB2 and activation of RAS, RAF1 and the MAP kinases MAPK1/ERK2 and/or MAPK3/ERK1. KITLG/SCF and KIT promote activation of STAT family members STAT1, STAT3 and STAT5. KITLG/SCF and KIT promote activation of PLCG1, leading to the production of the cellular signaling molecules diacylglycerol and inositol 1,4,5-trisphosphate. KITLG/SCF acts synergistically with other cytokines, probably interleukins. In Neovison vison (American mink), this protein is Kit ligand (KITLG).